The sequence spans 269 residues: MNYFSKLSCSWRITLGYLLFMLILPILALLSRASQELFSNFWSIAMEPAAIYAYSITLSMALIASIVNGIFGIFIAWILVRYNFPGKRIVDAAIDLPFALPTSVAGLTLATVYSEKGWIGHFLQSLSIKVVFTKLGVGVAMIFVSFPFVVRTLQPVLQDIEKELEEAAWSLGASSWTTFWKVIFPSLIPSLLTGIALAFSRAVGEYGSVVIIASNIPFKDLTAPVLIFQKLEQYDYTGATVIGTVILSISLFILVGINIIQSLNQMYSK.

The next 7 helical transmembrane spans lie at 10–30 (SWRI…LALL), 60–80 (MALI…WILV), 92–112 (AAID…LATV), 130–150 (VVFT…PFVV), 179–199 (FWKV…ALAF), 208–228 (SVVI…VLIF), and 240–260 (TVIG…INII). One can recognise an ABC transmembrane type-1 domain in the interval 54 to 255 (YSITLSMALI…ILSISLFILV (202 aa)).

The protein belongs to the binding-protein-dependent transport system permease family. CysTW subfamily.

It localises to the plastid. Its subcellular location is the chloroplast membrane. In terms of biological role, part of the ABC transporter complex cysAWTP (TC 3.A.1.6.1) involved in sulfate/thiosulfate import. Probably responsible for the translocation of the substrate across the membrane. The chain is Probable sulfate transport system permease protein cysT (cysT) from Mesostigma viride (Green alga).